Reading from the N-terminus, the 149-residue chain is 3-dehydroquinate dehydratase (149 aa).

Catalysis depends on Tyr-22, which acts as the Proton acceptor. Residues Asn-73, His-79, and Asp-86 each contribute to the substrate site. His-99 serves as the catalytic Proton donor. Substrate contacts are provided by residues 100–101 and Arg-110; that span reads LS.

It belongs to the type-II 3-dehydroquinase family. As to quaternary structure, homododecamer.

It catalyses the reaction 3-dehydroquinate = 3-dehydroshikimate + H2O. Its pathway is metabolic intermediate biosynthesis; chorismate biosynthesis; chorismate from D-erythrose 4-phosphate and phosphoenolpyruvate: step 3/7. In terms of biological role, catalyzes a trans-dehydration via an enolate intermediate. The sequence is that of 3-dehydroquinate dehydratase from Prochlorococcus marinus (strain MIT 9313).